Reading from the N-terminus, the 319-residue chain is Beta-ketoacyl-[acyl-carrier-protein] synthase III (319 aa).

Residues cysteine 112 and histidine 246 contribute to the active site. The interval 247–251 is ACP-binding; the sequence is QANFR. Asparagine 276 is an active-site residue.

It belongs to the thiolase-like superfamily. FabH family. As to quaternary structure, homodimer.

The protein resides in the cytoplasm. The enzyme catalyses malonyl-[ACP] + acetyl-CoA + H(+) = 3-oxobutanoyl-[ACP] + CO2 + CoA. It participates in lipid metabolism; fatty acid biosynthesis. Catalyzes the condensation reaction of fatty acid synthesis by the addition to an acyl acceptor of two carbons from malonyl-ACP. Catalyzes the first condensation reaction which initiates fatty acid synthesis and may therefore play a role in governing the total rate of fatty acid production. Possesses both acetoacetyl-ACP synthase and acetyl transacylase activities. Its substrate specificity determines the biosynthesis of branched-chain and/or straight-chain of fatty acids. This is Beta-ketoacyl-[acyl-carrier-protein] synthase III from Pseudoalteromonas atlantica (strain T6c / ATCC BAA-1087).